The chain runs to 48 residues: uncharacterized protein (48 aa).

A helical transmembrane segment spans residues 18 to 38; it reads IIIKYWYIDLTITIFAFLILY.

It is found in the host membrane. This is an uncharacterized protein from Acidianus bottle-shaped virus (isolate Italy/Pozzuoli) (ABV).